Consider the following 60-residue polypeptide: Protein K12 (60 aa).

This is Protein K12 (K12) from Human herpesvirus 8 type P (isolate GK18) (HHV-8).